Consider the following 603-residue polypeptide: Polypeptide N-acetylgalactosaminyltransferase 9 (603 aa).

Residues 1-6 lie on the Cytoplasmic side of the membrane; sequence MAVARK. Residues 7-29 traverse the membrane as a helical; Signal-anchor for type II membrane protein segment; sequence IRTLLTVNILVFVGIVLFSVYCR. Over 30-603 the chain is Lumenal; that stretch reads LQGRSQELVR…IRNWIKHARH (574 aa). 2 disulfide bridges follow: Cys-141-Cys-372 and Cys-363-Cys-442. Residues 150-261 are catalytic subdomain A; that stretch reads LPQVSVVFIF…TGWAEPALSR (112 aa). 2 residues coordinate substrate: Asp-191 and Arg-222. Residues Asp-245, His-247, and His-377 each contribute to the Mn(2+) site. Residues 318–380 form a catalytic subdomain B region; that stretch reads PIRTPAMIGC…PCSRVAHIER (63 aa). Substrate contacts are provided by Arg-380 and Tyr-385. An N-linked (GlcNAc...) asparagine glycan is attached at Asn-460. Positions 464–600 constitute a Ricin B-type lectin domain; it reads TYGEVRNSKA…KWMIRNWIKH (137 aa). 3 disulfide bridges follow: Cys-477-Cys-493, Cys-525-Cys-540, and Cys-567-Cys-587.

This sequence belongs to the glycosyltransferase 2 family. GalNAc-T subfamily. The cofactor is Mn(2+). In terms of tissue distribution, specifically expressed in brain. Not expressed in heart, placenta, lung, liver, skeletal muscle, kidney, pancreas, spleen, thymus, prostate, testis, ovary, small intestine, colon and leukocyte. In brain, it is expressed in cerebellum, frontal lobe, temporal lobe, putamen and spinal cord, weakly expressed in cerebral cortex. Not expressed in medulla and occipital pole.

The protein localises to the golgi apparatus membrane. It catalyses the reaction L-seryl-[protein] + UDP-N-acetyl-alpha-D-galactosamine = a 3-O-[N-acetyl-alpha-D-galactosaminyl]-L-seryl-[protein] + UDP + H(+). It carries out the reaction L-threonyl-[protein] + UDP-N-acetyl-alpha-D-galactosamine = a 3-O-[N-acetyl-alpha-D-galactosaminyl]-L-threonyl-[protein] + UDP + H(+). The protein operates within protein modification; protein glycosylation. In terms of biological role, catalyzes the initial reaction in O-linked oligosaccharide biosynthesis, the transfer of an N-acetyl-D-galactosamine residue to a serine or threonine residue on the protein receptor. Does not glycosylate apomucin or SDC3. The sequence is that of Polypeptide N-acetylgalactosaminyltransferase 9 (GALNT9) from Homo sapiens (Human).